We begin with the raw amino-acid sequence, 146 residues long: Spermidine export protein MdtJ (146 aa).

The next 4 helical transmembrane spans lie at 1–21 (MIYWIFLVLAIICEVIGTLSM), 31–51 (TGMIVMWLMIATSYIFLAIAV), 54–74 (VALGVAYALWEGIGIVIITTF), and 76–96 (VLWFGESLSALKLGGLAMLIA).

It belongs to the drug/metabolite transporter (DMT) superfamily. Small multidrug resistance (SMR) (TC 2.A.7.1) family. MdtJ subfamily. In terms of assembly, forms a complex with MdtI.

The protein resides in the cell inner membrane. In terms of biological role, catalyzes the excretion of spermidine. The protein is Spermidine export protein MdtJ of Proteus mirabilis (strain HI4320).